The primary structure comprises 86 residues: Muscarinic toxin 7 (86 aa).

An N-terminal signal peptide occupies residues 1–21 (MKTLLLTLVVVTIVCLDLGYT). Finger loop regions lie at residues 23 to 37 (TCVKSNSIWFPTSED), 44 to 63 (LCFKRWQYISPRMYDFTRGC), and 66 to 78 (TCPKAEYRDVINC). Cystine bridges form between C24–C45, C38–C63, C67–C78, and C79–C84.

This sequence belongs to the three-finger toxin family. Short-chain subfamily. Aminergic toxin sub-subfamily. As to expression, expressed by the venom gland.

Its subcellular location is the secreted. Its function is as follows. Binds specifically and irreversibly to an allosteric site of the muscarinic acetylcholine M1 receptor (CHRM1) at subnanomolar concentrations and shows a very slow dissociation rate. It also inhibits agonist-mediated guanosine 5'-O-(3'-thiotriphosphate) (GTP-g-S) binding and downstream signaling, and decreases the dissociation rate of orthosteric antagonists (N-methylscopolamine (NMS) or pirenzepine). Is a potent negative allosteric modulator (NAM) for CHRM1 activation and a positive allosteric modulator (PAM) for antagonist binding. This Dendroaspis angusticeps (Eastern green mamba) protein is Muscarinic toxin 7.